We begin with the raw amino-acid sequence, 105 residues long: Ketoisovalerate oxidoreductase subunit VorD (105 aa).

4Fe-4S ferredoxin-type domains lie at 44-73 (FMPV…IKED) and 74-103 (GFVA…MVRE). 8 residues coordinate [4Fe-4S] cluster: Cys-53, Cys-56, Cys-59, Cys-63, Cys-83, Cys-86, Cys-89, and Cys-93.

As to quaternary structure, heterotetramer of one alpha, one beta, one delta and one gamma chain. [4Fe-4S] cluster is required as a cofactor.

It catalyses the reaction 3-methyl-2-oxobutanoate + 2 oxidized [2Fe-2S]-[ferredoxin] + CoA = 2-methylpropanoyl-CoA + 2 reduced [2Fe-2S]-[ferredoxin] + CO2 + H(+). The protein is Ketoisovalerate oxidoreductase subunit VorD (vorD) of Pyrococcus abyssi (strain GE5 / Orsay).